We begin with the raw amino-acid sequence, 918 residues long: Hexokinase-1 (918 aa).

Methionine 1 is subject to N-acetylmethionine. Positions methionine 1–tyrosine 10 are mitochondrial-binding peptide (MBP). 2 consecutive Hexokinase domains span residues aspartate 16–alanine 458 and alanine 464–alanine 906. Residues arginine 30 and aspartate 84 to serine 89 contribute to the ATP site. The hexokinase small subdomain 1 stretch occupies residues aspartate 73–valine 207. Aspartate 84–arginine 91 serves as a coordination point for D-glucose 6-phosphate. D-glucose is bound by residues serine 155, threonine 172–lysine 173, and asparagine 208–aspartate 209. Residues asparagine 208–serine 447 are hexokinase large subdomain 1. Residues aspartate 209 and threonine 232 each coordinate D-glucose 6-phosphate. D-glucose-binding positions include asparagine 235, glutamate 260, and glutamine 291–glutamate 294. Serine 337 is modified (phosphoserine). Aspartate 413 to serine 415 lines the D-glucose 6-phosphate pocket. ATP contacts are provided by residues arginine 425–arginine 426 and aspartate 532–asparagine 537. The interval aspartate 521–valine 655 is hexokinase small subdomain 2. Aspartate 532 to threonine 536 serves as a coordination point for D-glucose 6-phosphate. Residues serine 603–phenylalanine 604, threonine 620–lysine 621, and asparagine 656–aspartate 657 each bind D-glucose. A hexokinase large subdomain 2 region spans residues asparagine 656–aspartate 895. The D-glucose 6-phosphate site is built by aspartate 657 and threonine 680. Threonine 680 is a binding site for ATP. Residues serine 682–asparagine 683, glutamate 708, and glutamate 742 each bind D-glucose. ATP-binding positions include glycine 747 to isoleucine 748, threonine 784 to serine 788, and threonine 863 to leucine 867. Residues aspartate 861–threonine 863 and serine 897 each bind D-glucose 6-phosphate.

This sequence belongs to the hexokinase family. In terms of assembly, monomer. Interacts with RABL2/RABL2A; binds preferentially to GTP-bound RABL2. Interacts with VDAC1. The HK1-VDAC1 complex interacts with ATF2. Interacts (via N-terminal spermatogenic cell-specific region) with PFKM (via C-terminus). Interacts with SMAD5.

Its subcellular location is the mitochondrion outer membrane. It localises to the cytoplasm. The protein localises to the cytosol. The enzyme catalyses a D-hexose + ATP = a D-hexose 6-phosphate + ADP + H(+). It carries out the reaction D-fructose + ATP = D-fructose 6-phosphate + ADP + H(+). It catalyses the reaction D-glucose + ATP = D-glucose 6-phosphate + ADP + H(+). The catalysed reaction is D-mannose + ATP = D-mannose 6-phosphate + ADP + H(+). The enzyme catalyses D-glucosamine + ATP = D-glucosamine 6-phosphate + ADP + H(+). The protein operates within carbohydrate metabolism; hexose metabolism. It participates in carbohydrate degradation; glycolysis; D-glyceraldehyde 3-phosphate and glycerone phosphate from D-glucose: step 1/4. Its activity is regulated as follows. Hexokinase is an allosteric enzyme inhibited by its product D-glucose 6-phosphate. Hexokinase activity is inhibited by N-acetyl-D-glucosamine. Its function is as follows. Catalyzes the phosphorylation of various hexoses, such as D-glucose, D-glucosamine, D-fructose, D-mannose and 2-deoxy-D-glucose, to hexose 6-phosphate (D-glucose 6-phosphate, D-glucosamine 6-phosphate, D-fructose 6-phosphate, D-mannose 6-phosphate and 2-deoxy-D-glucose 6-phosphate, respectively). Does not phosphorylate N-acetyl-D-glucosamine. Mediates the initial step of glycolysis by catalyzing phosphorylation of D-glucose to D-glucose 6-phosphate. Involved in innate immunity and inflammation by acting as a pattern recognition receptor for bacterial peptidoglycan. When released in the cytosol, N-acetyl-D-glucosamine component of bacterial peptidoglycan inhibits the hexokinase activity of HK1 and causes its dissociation from mitochondrial outer membrane, thereby activating the NLRP3 inflammasome. The protein is Hexokinase-1 of Bos taurus (Bovine).